A 213-amino-acid chain; its full sequence is High frequency lysogenization protein HflD homolog (213 aa).

Belongs to the HflD family.

The protein resides in the cytoplasm. The protein localises to the cell inner membrane. This chain is High frequency lysogenization protein HflD homolog, found in Klebsiella pneumoniae (strain 342).